A 747-amino-acid polypeptide reads, in one-letter code: Myotubularin-related protein 12 (747 aa).

One can recognise a Myotubularin phosphatase domain in the interval F205–Y643. Residues V449–K558 are interaction with MTM1. The disordered stretch occupies residues D548–K575. A compositionally biased stretch (polar residues) spans Q562–S572. Phosphoserine occurs at positions 564 and 601.

Belongs to the protein-tyrosine phosphatase family. Non-receptor class myotubularin subfamily. In terms of assembly, heterodimer with lipid phosphatase MTM1. Heterodimer with lipid phosphatase MTMR2. In terms of tissue distribution, expressed in skeletal muscles (at protein level).

The protein resides in the cytoplasm. It localises to the sarcoplasmic reticulum. It is found in the myofibril. Its subcellular location is the sarcomere. Its function is as follows. Acts as an adapter for the myotubularin-related phosphatases. Regulates phosphatase MTM1 protein stability and possibly its intracellular location. By stabilizing MTM1 protein levels, required for skeletal muscle maintenance but not for myogenesis. The protein is Myotubularin-related protein 12 (Mtmr12) of Mus musculus (Mouse).